Reading from the N-terminus, the 187-residue chain is Elongation factor P (187 aa).

Belongs to the elongation factor P family.

It localises to the cytoplasm. It participates in protein biosynthesis; polypeptide chain elongation. In terms of biological role, involved in peptide bond synthesis. Stimulates efficient translation and peptide-bond synthesis on native or reconstituted 70S ribosomes in vitro. Probably functions indirectly by altering the affinity of the ribosome for aminoacyl-tRNA, thus increasing their reactivity as acceptors for peptidyl transferase. The protein is Elongation factor P of Parasynechococcus marenigrum (strain WH8102).